An 86-amino-acid chain; its full sequence is MALLEFFRPKKTTTASVAKERLQIIVAERRSAGQSTPSYLPQLKLDLLEVIRKYVNINPDQVSVNLDQKDEDLSVLELNVTLPEDK.

It belongs to the MinE family.

Its function is as follows. Prevents the cell division inhibition by proteins MinC and MinD at internal division sites while permitting inhibition at polar sites. This ensures cell division at the proper site by restricting the formation of a division septum at the midpoint of the long axis of the cell. This chain is Cell division topological specificity factor, found in Photobacterium profundum (strain SS9).